Consider the following 90-residue polypeptide: DNA-directed RNA polymerase subunit omega (90 aa).

Residues 69 to 90 (RQEQQEQDAAELAAVSSITHNR) form a disordered region.

The protein belongs to the RNA polymerase subunit omega family. The RNAP catalytic core consists of 2 alpha, 1 beta, 1 beta' and 1 omega subunit. When a sigma factor is associated with the core the holoenzyme is formed, which can initiate transcription.

The enzyme catalyses RNA(n) + a ribonucleoside 5'-triphosphate = RNA(n+1) + diphosphate. Its function is as follows. Promotes RNA polymerase assembly. Latches the N- and C-terminal regions of the beta' subunit thereby facilitating its interaction with the beta and alpha subunits. In Aliivibrio fischeri (strain ATCC 700601 / ES114) (Vibrio fischeri), this protein is DNA-directed RNA polymerase subunit omega.